The chain runs to 200 residues: Imidazoleglycerol-phosphate dehydratase (200 aa).

The protein belongs to the imidazoleglycerol-phosphate dehydratase family.

The protein localises to the cytoplasm. It carries out the reaction D-erythro-1-(imidazol-4-yl)glycerol 3-phosphate = 3-(imidazol-4-yl)-2-oxopropyl phosphate + H2O. It participates in amino-acid biosynthesis; L-histidine biosynthesis; L-histidine from 5-phospho-alpha-D-ribose 1-diphosphate: step 6/9. The polypeptide is Imidazoleglycerol-phosphate dehydratase (Chlorobium phaeobacteroides (strain BS1)).